We begin with the raw amino-acid sequence, 37 residues long: LYSIASSAIGDFGFGDSKLDFAVSRGIDDIMVDLAAK.

NADP(+) is bound by residues Ser3 and 24–25 (SR).

It belongs to the ferredoxin--NADP reductase type 1 family. FAD serves as cofactor.

The protein localises to the plastid. Its subcellular location is the chloroplast stroma. It is found in the chloroplast thylakoid membrane. The catalysed reaction is 2 reduced [2Fe-2S]-[ferredoxin] + NADP(+) + H(+) = 2 oxidized [2Fe-2S]-[ferredoxin] + NADPH. It participates in energy metabolism; photosynthesis. May play a key role in regulating the relative amounts of cyclic and non-cyclic electron flow to meet the demands of the plant for ATP and reducing power. The sequence is that of Ferredoxin--NADP reductase, chloroplastic from Imperata cylindrica (Cogon grass).